A 237-amino-acid polypeptide reads, in one-letter code: UPF0758 protein Aave_3773 (237 aa).

One can recognise an MPN domain in the interval 115–237 (LFHSPRAVRD…SLSMAEEGLI (123 aa)). His-186, His-188, and Asp-199 together coordinate Zn(2+). Residues 186–199 (HNHPSGQVQPSRAD) carry the JAMM motif motif.

The protein belongs to the UPF0758 family.

The sequence is that of UPF0758 protein Aave_3773 from Paracidovorax citrulli (strain AAC00-1) (Acidovorax citrulli).